The chain runs to 447 residues: MPSFAALLPVILLGAGAVTAMLAAPRLPGLARWIAGFALVAASVALALRLGAPDGLSVLLADDRMSRLTGLVVCLSGIGSLAFLRPDGPSKEGPALLLLATLGGVVLTGAVHAASLFLGLELITLALVALFVLPLDRPALEAGYKFLILGAAAAATLLMGLALGHAATGSLALEAFGGREALLTFAAALLLAGLAFKLALVPFHMWTPDAFTGAPGAAAAFAGAASKVAVVTALVRLDAVGLPQVWALGLGTFAGVSILLGNLAALRQDGVARMLGYSSVGHAGYIAAALATGAASAPAAALFYIVTYAPALLAALCVAALIGRATRISDLRGIVWRRPLAGAAMAAALVSLAGLPVSAGFFGKYVIFTALIEGRAWALLALAIAGSALGAYYYLRFVALIFRRAPDPADPAVRWPERTLLGAATAIILLLGIRPDLLLDQIRAALP.

13 consecutive transmembrane segments (helical) span residues 4–24 (FAALLPVILLGAGAVTAMLAA), 27–47 (LPGLARWIAGFALVAASVALA), 68–88 (LTGLVVCLSGIGSLAFLRPDG), 92–112 (EGPALLLLATLGGVVLTGAVH), 113–133 (AASLFLGLELITLALVALFVL), 146–166 (FLILGAAAAATLLMGLALGHA), 181–201 (ALLTFAAALLLAGLAFKLALV), 215–235 (PGAAAAFAGAASKVAVVTALV), 245–265 (VWALGLGTFAGVSILLGNLAA), 280–300 (VGHAGYIAAALATGAASAPAA), 302–322 (LFYIVTYAPALLAALCVAALI), 342–362 (GAAMAAALVSLAGLPVSAGFF), and 376–395 (AWALLALAIAGSALGAYYYL).

The protein belongs to the complex I subunit 2 family. NDH-1 is composed of 14 different subunits. Subunits NuoA, H, J, K, L, M, N constitute the membrane sector of the complex.

The protein resides in the cell inner membrane. The enzyme catalyses a quinone + NADH + 5 H(+)(in) = a quinol + NAD(+) + 4 H(+)(out). In terms of biological role, NDH-1 shuttles electrons from NADH, via FMN and iron-sulfur (Fe-S) centers, to quinones in the respiratory chain. The immediate electron acceptor for the enzyme in this species is believed to be ubiquinone. Couples the redox reaction to proton translocation (for every two electrons transferred, four hydrogen ions are translocated across the cytoplasmic membrane), and thus conserves the redox energy in a proton gradient. The sequence is that of NADH-quinone oxidoreductase subunit N from Cereibacter sphaeroides (strain ATCC 17025 / ATH 2.4.3) (Rhodobacter sphaeroides).